We begin with the raw amino-acid sequence, 249 residues long: Undecaprenyl-diphosphatase (249 aa).

Transmembrane regions (helical) follow at residues 11–31 (GLTE…TAIF), 35–55 (PDVG…LIFV), 80–100 (LVLS…FIES), 101–121 (VFSS…LMLL), 135–155 (IPYF…LPGI), 180–200 (FLMS…NVAF), 202–222 (TEQI…LYLV), and 226–246 (VIGG…FFVL).

This sequence belongs to the UppP family.

It is found in the cell membrane. The enzyme catalyses di-trans,octa-cis-undecaprenyl diphosphate + H2O = di-trans,octa-cis-undecaprenyl phosphate + phosphate + H(+). Functionally, catalyzes the dephosphorylation of undecaprenyl diphosphate (UPP). The polypeptide is Undecaprenyl-diphosphatase (Methanococcus maripaludis (strain C7 / ATCC BAA-1331)).